The chain runs to 229 residues: Heptaprenylglyceryl phosphate synthase (229 aa).

Residue Lys12 coordinates sn-glycerol 1-phosphate. Positions 14 and 40 each coordinate Mg(2+). Sn-glycerol 1-phosphate is bound by residues 159–164, Gly189, and 209–210; these read YLEYSG and GN.

The protein belongs to the GGGP/HepGP synthase family. Group I subfamily. As to quaternary structure, homodimer. It depends on Mg(2+) as a cofactor.

The catalysed reaction is sn-glycerol 1-phosphate + all-trans-heptaprenyl diphosphate = 3-heptaprenyl-sn-glycero-1-phosphate + diphosphate. Its pathway is membrane lipid metabolism; glycerophospholipid metabolism. Prenyltransferase that catalyzes in vivo the transfer of the heptaprenyl moiety of heptaprenyl pyrophosphate (HepPP; 35 carbon atoms) to the C3 hydroxyl of sn-glycerol-1-phosphate (G1P), producing heptaprenylglyceryl phosphate (HepGP). This reaction is an ether-bond-formation step in the biosynthesis of archaea-type G1P-based membrane lipids found in Bacillales. This is Heptaprenylglyceryl phosphate synthase from Bacillus anthracis (strain A0248).